Reading from the N-terminus, the 31-residue chain is Malate dehydrogenase, mitochondrial (31 aa).

Residues 9-19 (GIGQPLSLLMK) and 20-31 (DDLFNINAGIVK) each bind NAD(+).

The protein belongs to the LDH/MDH superfamily. MDH type 1 family. Homodimer.

The protein resides in the mitochondrion matrix. The enzyme catalyses (S)-malate + NAD(+) = oxaloacetate + NADH + H(+). This is Malate dehydrogenase, mitochondrial from Imperata cylindrica (Cogon grass).